The sequence spans 408 residues: COP9 signalosome complex subunit 4 (408 aa).

Positions 194–374 (RIQDARRRFL…GIIYFESNTT (181 aa)) constitute a PCI domain.

This sequence belongs to the CSN4 family. As to quaternary structure, component of the COP9 signalosome (CSN) complex.

The protein localises to the cytoplasm. It is found in the nucleus. In terms of biological role, component of the COP9 signalosome (CSN) complex that acts as an regulator of the ubiquitin (Ubl) conjugation pathway by mediating the deneddylation of the cullin subunit of SCF-type E3 ubiquitin-protein ligase complexes. The CSN complex seems to link protein degradation to sexual development. Required for fruit body formation. This chain is COP9 signalosome complex subunit 4 (csnD), found in Emericella nidulans (strain FGSC A4 / ATCC 38163 / CBS 112.46 / NRRL 194 / M139) (Aspergillus nidulans).